Consider the following 503-residue polypeptide: Nuclear respiratory factor 1 (503 aa).

The segment at Met-1–Gly-78 is dimerization. The tract at residues Ser-36–Asp-57 is disordered. A phosphoserine; by CK2 mark is found at Ser-39, Ser-44, Ser-46, Ser-47, and Ser-52. The Nuclear localization signal signature appears at Gly-88–Arg-116. The DNA-binding element occupies Thr-109–Thr-305. Residue Lys-139 forms a Glycyl lysine isopeptide (Lys-Gly) (interchain with G-Cter in SUMO2) linkage. The segment at Val-301–Ala-476 is required for transcriptional activation.

Belongs to the NRF1/Ewg family. Homodimer. Binds DNA as a dimer. Interacts with PPRC1. Post-translationally, phosphorylation enhances DNA binding. In terms of tissue distribution, widely expressed in embryonic, fetal, and adult tissues.

It localises to the nucleus. Functionally, transcription factor that activates the expression of the EIF2S1 (EIF2-alpha) gene. Links the transcriptional modulation of key metabolic genes to cellular growth and development. Implicated in the control of nuclear genes required for respiration, heme biosynthesis, and mitochondrial DNA transcription and replication. This Mus musculus (Mouse) protein is Nuclear respiratory factor 1 (Nrf1).